Here is a 374-residue protein sequence, read N- to C-terminus: Probable plastid-lipid-associated protein 3, chloroplastic (374 aa).

A chloroplast-targeting transit peptide spans 1-46; it reads MAMPPPLFAAASHASLLLPSPTIHSSTGSRRPFRLPLRSSRRPPVA. Residues 19–148 are disordered; that stretch reads PSPTIHSSTG…EDNEEERREE (130 aa). Positions 28–54 are enriched in low complexity; sequence GSRRPFRLPLRSSRRPPVAAAAASGVP. Composition is skewed to pro residues over residues 64–73 and 127–136; these read APEPPSQPDP and PAPPPPPPPV.

It belongs to the PAP/fibrillin family.

It is found in the plastid. The protein localises to the chloroplast. This chain is Probable plastid-lipid-associated protein 3, chloroplastic (PAP3), found in Oryza sativa subsp. japonica (Rice).